We begin with the raw amino-acid sequence, 112 residues long: Nitrogenase-stabilizing/protective protein NifW (112 aa).

It belongs to the NifW family. Homotrimer; associates with NifD.

Its function is as follows. May protect the nitrogenase Fe-Mo protein from oxidative damage. This is Nitrogenase-stabilizing/protective protein NifW from Rhodopseudomonas palustris (strain BisA53).